The primary structure comprises 248 residues: Trihelix transcription factor ENAP2 (248 aa).

Polar residues predominate over residues 1 to 13; that stretch reads METTTPQSKSSVS. The segment at 1 to 20 is disordered; sequence METTTPQSKSSVSHRPPLGR. Residues 24 to 113 constitute a DNA-binding region (MADF); that stretch reads WSEEATATLV…RLDVLIGPVV (90 aa). The Nuclear localization signal signature appears at 69-76; sequence RKKTDLQC. Residues 123 to 150 form a disordered region; sequence SAPFKNHLNPTGSNSTGSSLEDDDEDDD. Polar residues predominate over residues 130 to 141; sequence LNPTGSNSTGSS. A coiled-coil region spans residues 190–210; the sequence is YERIEGKKQQMMIELEKQRME.

In terms of assembly, interacts with the Agrobacterium tumefaciens virulence protein F (VirF) in the nucleus. Binds to EIN2 C-terminal region in the presence of ethylene.

It is found in the nucleus. Its subcellular location is the nucleoplasm. Its function is as follows. Probable transcription regulator. Promotes histone acetylation during ethylene signaling in an EIN2-dependent manner, thus regulating positively ethylene-responsive genes. This Arabidopsis thaliana (Mouse-ear cress) protein is Trihelix transcription factor ENAP2.